Reading from the N-terminus, the 293-residue chain is 4-hydroxybenzoate octaprenyltransferase (293 aa).

The next 8 membrane-spanning stretches (helical) occupy residues 26 to 46 (IGTL…AKGM), 49 to 69 (IKVL…GCII), 102 to 122 (LFAL…PLVV), 148 to 168 (FLGI…LGEV), 173 to 193 (WWLF…YAMI), 217 to 237 (WIAV…LSAE), 240 to 260 (FIYA…QRLI), and 272 to 292 (FLNN…DYLL).

The protein belongs to the UbiA prenyltransferase family. Mg(2+) is required as a cofactor.

It localises to the cell inner membrane. It carries out the reaction all-trans-octaprenyl diphosphate + 4-hydroxybenzoate = 4-hydroxy-3-(all-trans-octaprenyl)benzoate + diphosphate. It participates in cofactor biosynthesis; ubiquinone biosynthesis. Its function is as follows. Catalyzes the prenylation of para-hydroxybenzoate (PHB) with an all-trans polyprenyl group. Mediates the second step in the final reaction sequence of ubiquinone-8 (UQ-8) biosynthesis, which is the condensation of the polyisoprenoid side chain with PHB, generating the first membrane-bound Q intermediate 3-octaprenyl-4-hydroxybenzoate. The polypeptide is 4-hydroxybenzoate octaprenyltransferase (Shewanella denitrificans (strain OS217 / ATCC BAA-1090 / DSM 15013)).